Here is a 933-residue protein sequence, read N- to C-terminus: Melanoma-associated antigen E1 (933 aa).

4 disordered regions span residues 1 to 113, 149 to 236, 256 to 282, and 360 to 393; these read MSLV…VSAG, GASI…GINL, SDISVPPPSAEGLSTSMPPPSGEVQST, and TSGLHDLEEESSISQMPLAAEGPSASGSSIEDEN. Over residues 8-23 the composition is skewed to basic residues; it reads SRRRRGGRANGRKNSG. Composition is skewed to polar residues over residues 64–97, 149–166, 173–184, and 219–236; these read GGSSTSVPPTASEGSSAPGQLITSEGRNTSQLPT, GASISEQPQSHEGPNVQP, GTSVPPTFSEES, and APSTSVPPTASNGLGINL. MAGE domains follow at residues 467–666 and 721–912; these read MEQN…YNEA and LESK…YREA. Residues 719-933 form an interaction with DTNA region; the sequence is SRLESKSRKL…RRPLVVRNLR (215 aa).

In terms of assembly, interacts with DTNA. Interacts with TRIM28.

The protein resides in the cytoplasm. It is found in the perinuclear region. Its subcellular location is the nucleus. It localises to the cell membrane. Functionally, may enhance ubiquitin ligase activity of RING-type zinc finger-containing E3 ubiquitin-protein ligases. Proposed to act through recruitment and/or stabilization of the Ubl-conjugating enzyme (E2) at the E3:substrate complex. This is Melanoma-associated antigen E1 (Magee1) from Rattus norvegicus (Rat).